Consider the following 84-residue polypeptide: U4-theraphotoxin-Hhn1ac (84 aa).

A signal peptide spans 1–22 (MKVTLIAILTCAAVLVLHTTAA). The propeptide occupies 23 to 47 (EELEESQLMEVGMPDTELAAVDEER). 3 disulfides stabilise this stretch: cysteine 51–cysteine 65, cysteine 55–cysteine 76, and cysteine 70–cysteine 81.

The protein belongs to the neurotoxin 12 (Hwtx-2) family. 02 (Hwtx-2) subfamily. As to expression, expressed by the venom gland.

It is found in the secreted. In terms of biological role, postsynaptic neurotoxin. This chain is U4-theraphotoxin-Hhn1ac, found in Cyriopagopus hainanus (Chinese bird spider).